The following is a 111-amino-acid chain: Large ribosomal subunit protein eL33z (111 aa).

The protein belongs to the eukaryotic ribosomal protein eL33 family.

In Arabidopsis thaliana (Mouse-ear cress), this protein is Large ribosomal subunit protein eL33z (RPL35AB).